The following is a 357-amino-acid chain: tRNA pseudouridine synthase D (357 aa).

Residue Asp-76 is the Nucleophile of the active site. Residues 151 to 331 enclose the TRUD domain; it reads GMPNYFGYQR…DGRYKDEEAQ (181 aa).

This sequence belongs to the pseudouridine synthase TruD family.

The catalysed reaction is uridine(13) in tRNA = pseudouridine(13) in tRNA. Responsible for synthesis of pseudouridine from uracil-13 in transfer RNAs. In Sulfurimonas denitrificans (strain ATCC 33889 / DSM 1251) (Thiomicrospira denitrificans (strain ATCC 33889 / DSM 1251)), this protein is tRNA pseudouridine synthase D.